The following is a 601-amino-acid chain: NADPH--cytochrome P450 reductase (601 aa).

The region spanning 25-169 is the Flavodoxin-like domain; it reads IVVFYGSQTG…DFVTWREQFW (145 aa). Residues 31–36, 83–86, 118–127, and aspartate 153 each bind FMN; these read SQTGTG, ATYG, and LGDKTYEHYN. One can recognise an FAD-binding FR-type domain in the interval 224 to 425; sequence KNPFLAPVTV…ICAVLVEYXT (202 aa). FAD contacts are provided by residues 399 to 402, 417 to 419, tyrosine 423, and 427 to 430; these read RYYS, CAV, and GVAT. Residues threonine 458, 519-520, 525-529, and aspartate 562 each bind NADP(+); these read SR and KVYVQ. Tryptophan 600 provides a ligand contact to FAD.

It belongs to the NADPH--cytochrome P450 reductase family. This sequence in the N-terminal section; belongs to the flavodoxin family. The protein in the C-terminal section; belongs to the flavoprotein pyridine nucleotide cytochrome reductase family. The cofactor is FAD. FMN serves as cofactor.

The protein resides in the endoplasmic reticulum membrane. The enzyme catalyses 2 oxidized [cytochrome P450] + NADPH = 2 reduced [cytochrome P450] + NADP(+) + H(+). In terms of biological role, this enzyme is required for electron transfer from NADP to cytochrome P450 in microsomes. It can also provide electron transfer to heme oxygenase and cytochrome B5. The chain is NADPH--cytochrome P450 reductase from Salmo trutta (Brown trout).